The following is a 105-amino-acid chain: Toxin ParE2 (105 aa).

Belongs to the RelE toxin family.

Toxic component of a type II toxin-antitoxin (TA) system. Its toxic effect is neutralized by coexpression with cognate antitoxin ParD2. The polypeptide is Toxin ParE2 (parE2) (Mycobacterium tuberculosis (strain CDC 1551 / Oshkosh)).